The sequence spans 73 residues: Large ribosomal subunit protein uL29 (73 aa).

Belongs to the universal ribosomal protein uL29 family.

This chain is Large ribosomal subunit protein uL29, found in Synechococcus sp. (strain JA-2-3B'a(2-13)) (Cyanobacteria bacterium Yellowstone B-Prime).